Reading from the N-terminus, the 302-residue chain is Glutaminase (302 aa).

Substrate contacts are provided by Ser61, Asn111, Glu155, Asn162, Tyr186, Tyr238, and Val256.

It belongs to the glutaminase family. As to quaternary structure, homotetramer.

It carries out the reaction L-glutamine + H2O = L-glutamate + NH4(+). The polypeptide is Glutaminase (Pseudomonas fluorescens (strain Pf0-1)).